Here is a 404-residue protein sequence, read N- to C-terminus: Argininosuccinate synthase (404 aa).

Residues 10-18 (AYSGGVDTS) and alanine 38 each bind ATP. Tyrosine 89 is a binding site for L-citrulline. Glycine 119 contacts ATP. Threonine 121, asparagine 125, and aspartate 126 together coordinate L-aspartate. Residue asparagine 125 coordinates L-citrulline. L-citrulline-binding residues include arginine 129, serine 177, serine 186, glutamate 262, and tyrosine 274.

This sequence belongs to the argininosuccinate synthase family. Type 1 subfamily. Homotetramer.

Its subcellular location is the cytoplasm. It catalyses the reaction L-citrulline + L-aspartate + ATP = 2-(N(omega)-L-arginino)succinate + AMP + diphosphate + H(+). It participates in amino-acid biosynthesis; L-arginine biosynthesis; L-arginine from L-ornithine and carbamoyl phosphate: step 2/3. The protein is Argininosuccinate synthase of Prochlorococcus marinus (strain MIT 9312).